We begin with the raw amino-acid sequence, 1624 residues long: MTIDPGAKQDVEAWTTFTASADIPDWISKAYIDSYRGPRDDSSEATKAAEASWLPASLLTPAMLGAHYRLGRHRAAGESCVAVYRADDPAGFGPALQVVAEHGGMLMDSVTVLLHRLGIAYAAILTPVFDVHRSPTGELLRIEPKAEGTSPHLGEAWMHVALSPAVDHKGLAEVERLLPKVLADVQRVATDATALIATLSELAGEVESNAGGRFSAPDRQDVGELLRWLGDGNFLLLGYQRCRVADGMVYGEGSSGMGVLRGRTGSRPRLTDDDKLLVLAQARVGSYLRYGAYPYAIAVREYVDGSVVEHRFVGLFSVAAMNADVLEIPTISRRVREALAMAESDPSHPGQLLLDVIQTVPRPELFTLSAQRLLTMARAVVDLGSQRQALLFLRADRLQYFVSCLVYMPRDRYTTAVRMQFEDILVREFGGTRLEFTARVSESPWALMHFMVRLPEVGVAGEGAAAPPVDVSEANRIRIQGLLTEAARTWADRLIGAAAAAGSVGQADAMHYAAAFSEAYKQAVTPADAIGDIAVITELTDDSVKLVFSERDEQGVAQLTWFLGGRTASLSQLLPMLQSMGVVVLEERPFSVTRPDGLPVWIYQFKISPHPTIPLAPTVAERAATAHRFAEAVTAIWHGRVEIDRFNELVMRAGLTWQQVVLLRAYAKYLRQAGFPYSQSYIESVLNEHPATVRSLVDLFEALFVPVPSGSASNRDAQAAAAAVAADIDALVSLDTDRILRAFASLVQATLRTNYFVTRQGSARCRDVLALKLNAQLIDELPLPRPRYEIFVYSPRVEGVHLRFGPVARGGLRWSDRRDDFRTEILGLVKAQAVKNAVIVPVGAKGGFVVKRPPLPTGDPAADRDATRAEGVACYQLFISGLLDVTDNVDHATASVNPPPEVVRRDGDDAYLVVAADKGTATFSDIANDVAKSYGFWLGDAFASGGSVGYDHKAMGITARGAWEAVKRHFREIGIDTQTQDFTVVGIGDMSGDVFGNGMLLSKHIRLIAAFDHRHIFLDPNPDAAVSWAERRRMFELPRSSWSDYDRSLISEGGGVYSREQKAIPLSAQVRAVLGIDGSVDGGAAEMAPPNLIRAILRAPVDLLFNGGIGTYIKAESESDADVGDRANDPVRVNANQVRAKVIGEGGNLGVTALGRVEFDLSGGRINTDALDNSAGVDCSDHEVNIKILIDSLVSAGTVKADERTQLLESMTDEVAQLVLADNEDQNDLMGTSRANAASLLPVHAMQIKYLVAERGVNRELEALPSEKEIARRSEAGIGLTSPELATLMAHVKLGLKEEVLATELPDQDVFASRLPRYFPTALRERFTPEIRSHQLRREIVTTMLINDLVDTAGITYAFRIAEDVGVTPIDAVRTYVATDAIFGVGHIWRRIRAANLPIALSDRLTLDTRRLIDRAGRWLLNYRPQPLAVGAEINRFAAMVKALTPRMSEWLRGDDKAIVEKTAAEFASQGVPEDLAYRVSTGLYRYSLLDIIDIADIADIDAAEVADTYFALMDRLGTDGLLTAVSQLPRHDRWHSLARLAIRDDIYGALRSLCFDVLAVGEPGESSEQKIAEWEHLSASRVARARRTLDDIRASGQKDLATLSVAARQIRRMTRTSGRGISG.

The active site involves lysine 845.

It belongs to the Glu/Leu/Phe/Val dehydrogenases family. As to quaternary structure, interacts with (unphosphorylated) GarA.

It catalyses the reaction L-glutamate + NAD(+) + H2O = 2-oxoglutarate + NH4(+) + NADH + H(+). Activity is inhibited by unphosphorylated GarA. Functionally, catalyzes the reversible conversion of L-glutamate to 2-oxoglutarate. This is NAD-specific glutamate dehydrogenase (gdh) from Mycobacterium tuberculosis (strain ATCC 25618 / H37Rv).